We begin with the raw amino-acid sequence, 190 residues long: Nucleoside triphosphate pyrophosphatase (190 aa).

The active-site Proton acceptor is Asp-69.

The protein belongs to the Maf family. Requires a divalent metal cation as cofactor.

The protein resides in the cytoplasm. It catalyses the reaction a ribonucleoside 5'-triphosphate + H2O = a ribonucleoside 5'-phosphate + diphosphate + H(+). It carries out the reaction a 2'-deoxyribonucleoside 5'-triphosphate + H2O = a 2'-deoxyribonucleoside 5'-phosphate + diphosphate + H(+). Its function is as follows. Nucleoside triphosphate pyrophosphatase. May have a dual role in cell division arrest and in preventing the incorporation of modified nucleotides into cellular nucleic acids. The protein is Nucleoside triphosphate pyrophosphatase of Helicobacter pylori (strain Shi470).